A 674-amino-acid chain; its full sequence is DNA ligase (674 aa).

Residues Asp34 to Asp38, Ser82 to Leu83, and Glu107 contribute to the NAD(+) site. Catalysis depends on Lys109, which acts as the N6-AMP-lysine intermediate. Arg130, Glu170, Lys286, and Lys310 together coordinate NAD(+). Zn(2+) contacts are provided by Cys404, Cys407, Cys423, and Cys429. The BRCT domain maps to Lys593 to Ala674.

The protein belongs to the NAD-dependent DNA ligase family. LigA subfamily. The cofactor is Mg(2+). Requires Mn(2+) as cofactor.

It catalyses the reaction NAD(+) + (deoxyribonucleotide)n-3'-hydroxyl + 5'-phospho-(deoxyribonucleotide)m = (deoxyribonucleotide)n+m + AMP + beta-nicotinamide D-nucleotide.. DNA ligase that catalyzes the formation of phosphodiester linkages between 5'-phosphoryl and 3'-hydroxyl groups in double-stranded DNA using NAD as a coenzyme and as the energy source for the reaction. It is essential for DNA replication and repair of damaged DNA. In Corynebacterium aurimucosum (strain ATCC 700975 / DSM 44827 / CIP 107346 / CN-1) (Corynebacterium nigricans), this protein is DNA ligase.